Reading from the N-terminus, the 357-residue chain is Eukaryotic translation initiation factor 3 subunit F (357 aa).

An MPN domain is found at 30-169 (VHIQPQAVFS…TKAYISAPVA (140 aa)). Positions 309–357 (VGGDKEGGEKGKDGEDGGRGGRGGKRGGGGRGGHRGEPREPREPREPAE) are disordered. Basic and acidic residues-rich tracts occupy residues 311 to 327 (GDKE…DGGR) and 342 to 357 (HRGE…EPAE).

Belongs to the eIF-3 subunit F family. In terms of assembly, component of the eukaryotic translation initiation factor 3 (eIF-3) complex.

Its subcellular location is the cytoplasm. In terms of biological role, component of the eukaryotic translation initiation factor 3 (eIF-3) complex, which is involved in protein synthesis of a specialized repertoire of mRNAs and, together with other initiation factors, stimulates binding of mRNA and methionyl-tRNAi to the 40S ribosome. The eIF-3 complex specifically targets and initiates translation of a subset of mRNAs involved in cell proliferation. In Chaetomium globosum (strain ATCC 6205 / CBS 148.51 / DSM 1962 / NBRC 6347 / NRRL 1970) (Soil fungus), this protein is Eukaryotic translation initiation factor 3 subunit F.